The sequence spans 427 residues: Vitamin D3 receptor (427 aa).

The segment at residues P21–T96 is a DNA-binding region (nuclear receptor). Residues C24, C27, C41, C44, C60, C66, C76, and C79 each coordinate Zn(2+). 2 consecutive NR C4-type zinc fingers follow at residues C24–C44 and C60–C84. The segment at D97 to E126 is hinge. Residues E127–G423 enclose the NR LBD domain. Y143 contacts calcitriol. The interval R158 to S183 is disordered. S237 contributes to the calcitriol binding site. The interaction with coactivator LXXLL motif stretch occupies residues K246–K264. Residues R274, S278, H305, and H397 each coordinate calcitriol. A 9aaTAD motif is present at residues P416–N424.

It belongs to the nuclear hormone receptor family. NR1 subfamily. As to quaternary structure, homodimer in the absence of bound vitamin D3. Heterodimer with RXRA after vitamin D3 binding. Interacts with MED1, NCOA1, NCOA2, NCOA3 and NCOA6 coactivators, leading to a strong increase of transcription of target genes. Interacts with the corepressor NCOR1. Interacts with SNW1. Interacts with IRX4, the interaction does not affect its transactivation activity. In terms of processing, ubiquitinated by UBR5, leading to its degradation: UBR5 specifically recognizes and binds ligand-bound VDR when it is not associated with coactivators (NCOAs). In presence of NCOAs, the UBR5-degron is not accessible, preventing its ubiquitination and degradation.

The protein localises to the nucleus. It is found in the cytoplasm. Its function is as follows. Nuclear receptor for calcitriol, the active form of vitamin D3 which mediates the action of this vitamin on cells. Enters the nucleus upon vitamin D3 binding where it forms heterodimers with the retinoid X receptor/RXR. The VDR-RXR heterodimers bind to specific response elements on DNA and activate the transcription of vitamin D3-responsive target genes. Plays a central role in calcium homeostasis. This Saguinus oedipus (Cotton-top tamarin) protein is Vitamin D3 receptor (VDR).